Consider the following 197-residue polypeptide: Probable molybdenum cofactor guanylyltransferase (197 aa).

Residues 6 to 8 (LAG), K18, D65, and D97 each bind GTP. D97 provides a ligand contact to Mg(2+).

This sequence belongs to the MobA family. Mg(2+) is required as a cofactor.

The protein localises to the cytoplasm. It catalyses the reaction Mo-molybdopterin + GTP + H(+) = Mo-molybdopterin guanine dinucleotide + diphosphate. Functionally, transfers a GMP moiety from GTP to Mo-molybdopterin (Mo-MPT) cofactor (Moco or molybdenum cofactor) to form Mo-molybdopterin guanine dinucleotide (Mo-MGD) cofactor. The protein is Probable molybdenum cofactor guanylyltransferase of Staphylococcus carnosus (strain TM300).